A 361-amino-acid chain; its full sequence is Peptide chain release factor 1 (361 aa).

The residue at position 235 (glutamine 235) is an N5-methylglutamine. Positions 288–307 are disordered; that stretch reads AARSADRKDQVGSGDRSERI.

This sequence belongs to the prokaryotic/mitochondrial release factor family. Post-translationally, methylated by PrmC. Methylation increases the termination efficiency of RF1.

It localises to the cytoplasm. Peptide chain release factor 1 directs the termination of translation in response to the peptide chain termination codons UAG and UAA. This chain is Peptide chain release factor 1, found in Nitrobacter hamburgensis (strain DSM 10229 / NCIMB 13809 / X14).